Here is a 284-residue protein sequence, read N- to C-terminus: Short-chain dehydrogenase RED1 (284 aa).

Residues Ile11, Thr37, Asp58, Asn86, Tyr151, Lys155, Val184, and Thr186 each contribute to the NADP(+) site. The Proton acceptor role is filled by Tyr151. Residue Lys155 is the Lowers pKa of active site Tyr of the active site.

The protein belongs to the short-chain dehydrogenases/reductases (SDR) family.

Its pathway is polyketide biosynthesis. Functionally, short-chain dehydrogenase; part of the gene cluster that mediates the biosynthesis of pyriculol and pyriculariol, two heptaketides that induce lesion formation upon application on rice leaves but are dispensable for pathogenicity. The highly reducing polyketide synthase synthesizes the heptaketide backbone of pyriculol and pyriculariol. Pyriculol and pyriculariol contain several hydroxyl moieties and double bonds, so it can be assumed that several reduction steps occur during biosynthesis. These reactions could be executed by PKS19 itself or partly by the tailoring enzymes OXR1, OXR2, RED1, RED2 or RED3, identified within the cluster. The FAD-linked oxidoreductase OXR1 is the only tailoring enzyme for which the function has been determined yet, and is involved in the oxidation of dihydropyriculol and dihydropyriculariol into pyriculol and pyriculariol, respectively. This is Short-chain dehydrogenase RED1 from Pyricularia oryzae (strain 70-15 / ATCC MYA-4617 / FGSC 8958) (Rice blast fungus).